The primary structure comprises 296 residues: tRNA dimethylallyltransferase (296 aa).

Position 10–17 (10–17 (GPTASGKT)) interacts with ATP. 12-17 (TASGKT) is a substrate binding site. An interaction with substrate tRNA region spans residues 35–38 (DSRQ).

Belongs to the IPP transferase family. Monomer. Mg(2+) serves as cofactor.

It catalyses the reaction adenosine(37) in tRNA + dimethylallyl diphosphate = N(6)-dimethylallyladenosine(37) in tRNA + diphosphate. Functionally, catalyzes the transfer of a dimethylallyl group onto the adenine at position 37 in tRNAs that read codons beginning with uridine, leading to the formation of N6-(dimethylallyl)adenosine (i(6)A). This is tRNA dimethylallyltransferase from Synechococcus sp. (strain RCC307).